Here is a 1146-residue protein sequence, read N- to C-terminus: Nucleolar protein 6 (1146 aa).

Residues 1 to 48 form a disordered region; the sequence is MGPAPAGEQLRGATGEPEVMEPALEGTGKEGKKASSRKRTLAEPPAKG. S56 is subject to Phosphoserine. A coiled-coil region spans residues 83-114; it reads LLRLQVEELLKEVRLSEKKKDRIDAFLREVNQ. Phosphoserine is present on residues S283, S289, and S811.

Belongs to the NRAP family. Part of the small subunit (SSU) processome, composed of more than 70 proteins and the RNA chaperone small nucleolar RNA (snoRNA) U3. Interacts with RRP7A; required for NOL6 localization to nucleolus.

It is found in the nucleus. Its subcellular location is the nucleolus. The protein localises to the chromosome. Part of the small subunit (SSU) processome, first precursor of the small eukaryotic ribosomal subunit. During the assembly of the SSU processome in the nucleolus, many ribosome biogenesis factors, an RNA chaperone and ribosomal proteins associate with the nascent pre-rRNA and work in concert to generate RNA folding, modifications, rearrangements and cleavage as well as targeted degradation of pre-ribosomal RNA by the RNA exosome. This is Nucleolar protein 6 from Homo sapiens (Human).